Consider the following 828-residue polypeptide: Chitin synthase 7 (828 aa).

The next 6 helical transmembrane spans lie at 17–37 (VIVG…VAAF), 57–77 (AVVV…IMVV), 95–115 (VGLQ…PWLF), 444–464 (FMQN…LAIL), 473–493 (LPVG…IYFG), and 501–521 (IWLY…YMVY). Residue asparagine 615 is glycosylated (N-linked (GlcNAc...) asparagine). Low complexity-rich tracts occupy residues 740–752 (SLVS…SNSN) and 813–822 (SNNDPNNSNS). 2 disordered regions span residues 740–780 (SLVS…LGRA) and 793–828 (LEIG…HQQR). The N-linked (GlcNAc...) asparagine glycan is linked to asparagine 818.

Belongs to the chitin synthase family. Class VII subfamily.

Its subcellular location is the membrane. The catalysed reaction is [(1-&gt;4)-N-acetyl-beta-D-glucosaminyl](n) + UDP-N-acetyl-alpha-D-glucosamine = [(1-&gt;4)-N-acetyl-beta-D-glucosaminyl](n+1) + UDP + H(+). Polymerizes chitin, a structural polymer of the cell wall and septum, by transferring the sugar moiety of UDP-GlcNAc to the non-reducing end of the growing chitin polymer. Required for normal appressorial chitin content and for the normal formation and function of these infection structures. The polypeptide is Chitin synthase 7 (Pyricularia oryzae (strain 70-15 / ATCC MYA-4617 / FGSC 8958) (Rice blast fungus)).